The chain runs to 361 residues: Diacylglycerol O-acyltransferase 2 (361 aa).

The Cytoplasmic segment spans residues 1-42 (MKTIIAAYSGVLRGTGSSLLSAVHDLPNIPWLSKSSVVRHLQ). The helical transmembrane segment at 43-61 (IISVLQWVLSFLILGVACT) threads the bilayer. The Lumenal portion of the chain corresponds to 62 to 65 (AVLV). The helical transmembrane segment at 66–85 (YIFCTDLWLIAALYLTWMVL) threads the bilayer. At 86 to 361 (DWNTPYKGGR…LHDSEMLEIV (276 aa)) the chain is on the cytoplasmic side.

Belongs to the diacylglycerol acyltransferase family.

The protein localises to the endoplasmic reticulum membrane. The protein resides in the lipid droplet. It is found in the cytoplasm. It localises to the perinuclear region. It carries out the reaction an acyl-CoA + a 1,2-diacyl-sn-glycerol = a triacyl-sn-glycerol + CoA. The enzyme catalyses all-trans-retinol + an acyl-CoA = an all-trans-retinyl ester + CoA. The catalysed reaction is 2-(9Z-octadecenoyl)-glycerol + (9Z)-octadecenoyl-CoA = 1,2-di-(9Z-octadecenoyl)-sn-glycerol + CoA. It catalyses the reaction 1,2-di-(9Z-octadecenoyl)-sn-glycerol + (9Z)-octadecenoyl-CoA = 1,2,3-tri-(9Z-octadecenoyl)-glycerol + CoA. It carries out the reaction all-trans-retinol + hexadecanoyl-CoA = all-trans-retinyl hexadecanoate + CoA. The enzyme catalyses 1-O-(9Z-octadecenyl)-glycerol + (9Z)-octadecenoyl-CoA = 1-O-(9Z-octadecyl)-3-(9Z-octadecenoyl)-glycerol + CoA. The catalysed reaction is 1-(9Z-octadecenoyl)-glycerol + (9Z)-octadecenoyl-CoA = 1,2-di-(9Z-octadecenoyl)-glycerol + CoA. It catalyses the reaction 1,2-di-(9Z-octadecenoyl)-sn-glycerol + hexadecanoyl-CoA = 1,2-di-(9Z)-octadecenoyl-3-hexadecanoyl-sn-glycerol + CoA. It carries out the reaction 1,3-di-(9Z-octadecenoyl)-glycerol + (9Z)-octadecenoyl-CoA = 1,2,3-tri-(9Z-octadecenoyl)-glycerol + CoA. The enzyme catalyses 2,3-di-(9Z)-octadecenoyl-sn-glycerol + (9Z)-octadecenoyl-CoA = 1,2,3-tri-(9Z-octadecenoyl)-glycerol + CoA. The catalysed reaction is 2-(9Z-octadecenoyl)-glycerol + hexadecanoyl-CoA = 1-hexadecanoyl-2-(9Z-octadecenoyl)-sn-glycerol + CoA. Its pathway is glycerolipid metabolism; triacylglycerol biosynthesis. In terms of biological role, essential acyltransferase that catalyzes the terminal and only committed step in triacylglycerol synthesis by using diacylglycerol and fatty acyl CoA as substrates. Required for synthesis and storage of intracellular triglycerides. Probably plays a central role in cytosolic lipid accumulation. In Xenopus tropicalis (Western clawed frog), this protein is Diacylglycerol O-acyltransferase 2 (dgat2).